The sequence spans 576 residues: Probable DNA ligase (576 aa).

Glu-235 contributes to the ATP binding site. Lys-237 acts as the N6-AMP-lysine intermediate in catalysis. 6 residues coordinate ATP: Arg-242, Arg-257, Glu-285, Phe-324, Arg-422, and Lys-428.

Belongs to the ATP-dependent DNA ligase family. Mg(2+) serves as cofactor.

The catalysed reaction is ATP + (deoxyribonucleotide)n-3'-hydroxyl + 5'-phospho-(deoxyribonucleotide)m = (deoxyribonucleotide)n+m + AMP + diphosphate.. Functionally, DNA ligase that seals nicks in double-stranded DNA during DNA replication, DNA recombination and DNA repair. The chain is Probable DNA ligase from Koribacter versatilis (strain Ellin345).